Reading from the N-terminus, the 434-residue chain is Pectate lyase (434 aa).

The N-terminal stretch at 1-22 (MKAAQFFLYSLLFFASAALSSA) is a signal peptide. 2 N-linked (GlcNAc...) asparagine glycosylation sites follow: asparagine 68 and asparagine 97. Aspartate 232, aspartate 256, and aspartate 260 together coordinate Ca(2+). Arginine 312 is a catalytic residue.

Belongs to the polysaccharide lyase 1 family. It depends on Ca(2+) as a cofactor.

It catalyses the reaction Eliminative cleavage of (1-&gt;4)-alpha-D-galacturonan to give oligosaccharides with 4-deoxy-alpha-D-galact-4-enuronosyl groups at their non-reducing ends.. It participates in glycan metabolism; pectin degradation; 2-dehydro-3-deoxy-D-gluconate from pectin: step 2/5. This Lilium longiflorum (Trumpet lily) protein is Pectate lyase.